Reading from the N-terminus, the 171-residue chain is LIM domain transcription factor LMO4-A (171 aa).

The segment covering 1 to 19 (MVNNRSSESTTTAVSSNGS) has biased composition (polar residues). The disordered stretch occupies residues 1–21 (MVNNRSSESTTTAVSSNGSPP). 2 consecutive LIM zinc-binding domains span residues 22–84 (KACA…LFGN) and 86–148 (GACN…GLLN).

At the start of gastrulation (stage 10), expressed in the mesodermal marginal zone. Shortly after (stage 11), expression is down-regulated in the dorsal most region. During neurulation, expressed in the neural plate and ventral epidermis. At late neurula stages, also expressed more rostrally, and then in the brain, migrating neural crests and ventral epidermis.

Acts as a positive cofactor of GATA transcription factors to establish the identity of the ventral mesoderm during gastrulation. Down-regulation in the dorsal mesoderm is necessary for the proper formation of this territory since, when present, lmo4 may bind ldb1 and restrict the availability of this cofactor for Spemman organizer transcription factors. At neurula stages, suppresses primary neuron differentiation and modulates gene expression at the Isthmic Organizer of the midbrain-hindbrain boundary. The protein is LIM domain transcription factor LMO4-A (lmo4-a) of Xenopus laevis (African clawed frog).